A 323-amino-acid chain; its full sequence is Transcription factor MafB (323 aa).

Residue K32 forms a Glycyl lysine isopeptide (Lys-Gly) (interchain with G-Cter in SUMO) linkage. Positions 34 to 43 (EPLGRAERPG) are enriched in basic and acidic residues. Disordered stretches follow at residues 34–78 (EPLG…PTEP) and 116–210 (PVPQ…VEDR). A compositionally biased stretch (low complexity) spans 54-77 (SVSSTPLSTPCSSVPSSPSFSPTE). Composition is skewed to basic residues over residues 129-143 (SAHH…HPHH) and 159-168 (AHPHHHHHHQ). The segment covering 192–201 (PHATAAATAA) has biased composition (low complexity). The interval 238–263 (RLKQKRRTLKNRGYAQSCRYKRVQQK) is basic motif. In terms of domain architecture, bZIP spans 238–301 (RLKQKRRTLK…DAYKVKCEKL (64 aa)). Residues 266-287 (LENEKTQLIQQVEQLKQEVSRL) form a leucine-zipper region. A Glycyl lysine isopeptide (Lys-Gly) (interchain with G-Cter in SUMO) cross-link involves residue K297.

It belongs to the bZIP family. Maf subfamily. Homodimer or heterodimer with other bHLH-Zip transcription factors. Forms homodimers and heterodimers with FOS, FOSB and FOSL2, but not with JUN proteins (JUN, JUNB and JUND). Interacts with the intracellular cytoplasmic domain of LRP1 (LRPICD); the interaction results in a moderate reduction of MAFB transcriptional potential. Binds DNA as a homodimer or a heterodimer. Interacts with PAX6; the interaction is direct. Interacts with ETS1 and LRP1. In terms of processing, sumoylated. Sumoylation on Lys-32 and Lys-297 stimulates its transcriptional repression activity and promotes macrophage differentiation from myeloid progenitors. Expressed in pancreatic alpha-cells (glucagon-positive cells), in podocytes of the kidney and macrophages (at protein level). Most abundant in kidney, gut, lung and brain.

The protein resides in the nucleus. Its function is as follows. Acts as a transcriptional activator or repressor. Plays a pivotal role in regulating lineage-specific hematopoiesis by repressing ETS1-mediated transcription of erythroid-specific genes in myeloid cells. Required for monocytic, macrophage, osteoclast, podocyte and islet beta cell differentiation. Involved in renal tubule survival and F4/80 maturation. Activates the insulin and glucagon promoters. Together with PAX6, transactivates weakly the glucagon gene promoter through the G1 element. SUMO modification controls its transcriptional activity and ability to specify macrophage fate. Binds element G1 on the glucagon promoter. Involved either as an oncogene or as a tumor suppressor, depending on the cell context. Required for the transcriptional activation of HOXB3 in the rhombomere r5 in the hindbrain. In Mus musculus (Mouse), this protein is Transcription factor MafB (Mafb).